The following is a 267-amino-acid chain: MRPADLIRQKQNGRTITILTAWDSLSAALVEAAGADAVLVGDSLAMVALGHATTLPVTLDQMRHHTLAVSRGFAAAPSKQPLLICDLPFLSYQCGADLAVQAAGTLLKETPAAAVKLEGAEAEVLAVIDRLVRMGIPVMGHLGLTPQAVHRLGYRRQAEDPVSQERLLTQAIALEQAGCFALVLEHVPSALAREVRRRLLIPVIGIGAGDDCDGQIRVTADLLGLTEQQPPFSPALIPGQQLFVEALRTWIAAQTPTTTPPPATPDY.

Positions 42 and 86 each coordinate Mg(2+). 3-methyl-2-oxobutanoate-binding positions include 42–43, D86, and K116; that span reads DS. E118 provides a ligand contact to Mg(2+). E185 serves as the catalytic Proton acceptor.

Belongs to the PanB family. In terms of assembly, homodecamer; pentamer of dimers. Mg(2+) is required as a cofactor.

The protein resides in the cytoplasm. The catalysed reaction is 3-methyl-2-oxobutanoate + (6R)-5,10-methylene-5,6,7,8-tetrahydrofolate + H2O = 2-dehydropantoate + (6S)-5,6,7,8-tetrahydrofolate. Its pathway is cofactor biosynthesis; (R)-pantothenate biosynthesis; (R)-pantoate from 3-methyl-2-oxobutanoate: step 1/2. Catalyzes the reversible reaction in which hydroxymethyl group from 5,10-methylenetetrahydrofolate is transferred onto alpha-ketoisovalerate to form ketopantoate. This is 3-methyl-2-oxobutanoate hydroxymethyltransferase from Parasynechococcus marenigrum (strain WH8102).